The following is a 224-amino-acid chain: Histone H1.03 (224 aa).

Composition is skewed to low complexity over residues 1-22 (MAET…AKAA) and 30-42 (AAGG…PAGP). 2 disordered regions span residues 1–43 (MAET…AGPS) and 99–224 (QTKG…PKKK). An H15 domain is found at 40 to 113 (AGPSVTELIT…GASGSFRLSK (74 aa)). 4 stretches are compositionally biased toward basic residues: residues 122 to 137 (APKK…KPAA), 145 to 162 (KKPK…KAKK), 170 to 188 (KAAK…KKAV), and 197 to 224 (KAVK…PKKK).

Belongs to the histone H1/H5 family.

It localises to the nucleus. The protein resides in the chromosome. In terms of biological role, histones H1 are necessary for the condensation of nucleosome chains into higher-order structures. The chain is Histone H1.03 from Gallus gallus (Chicken).